Consider the following 329-residue polypeptide: Chloroplast envelope quinone oxidoreductase homolog (329 aa).

A substrate-binding site is contributed by Arg-58.

Belongs to the zinc-containing alcohol dehydrogenase family. Quinone oxidoreductase subfamily. As to quaternary structure, homodimer or homotetramer. Transition to monomer upon NADPH binding. Interacts with calmodulin. Interacts with HP30-1, HP30-2 and HP20.

The protein localises to the plastid. Its subcellular location is the chloroplast inner membrane. Functionally, NADPH-dependent alpha,beta-unsaturated oxoene reductase reducing the double bond of medium-chain (C9) to long-chain (C18) reactive electrophile species deriving from poly-unsaturated fatty acid peroxides. The best substrates are 13-lipoxygenase-derived gamma-ketols, but is unable to reduce the double bond of short-chain alkenals and alkenones such as acrolein, crotonaldehyde, 3-buten-2-one, 4-hexen-3-one and trans-2-hexenal, or quinones such as duroquinone, decylubiquinone, coenzyme Q0, menadione, menaquinone and phylloquinone. Can use trans-2-nonenal, trans-3-decen-2-one, 4-hydroxynonenal, 12-oxo-10(E) dodecanoate (traumatin), 4-oxononenal, trans-1,3 diphenyl-2-propenone, trans-1,4-diphenyl-2-butene-1,4-dione, 9-oxo-12,13-epoxy-(10E)-octadecenoic acid (trans-EKODE-1b), 9-hydroxy-12-oxo-10(E)-octadecenoic acid, 9-Hydroxy-12-oxo-10(E),15(Z)-octadecadienoic acid and 9,13-dihydroxy-10-oxo-11-octadecenoic acid as substrates, but has no activity with 13(R,S)-hydroperoxy-9(Z),11(E)-octadecadienoic acid (13-HPOD), 9(S),12(S),13(S)-trihydroxy-10(E)-octadecenoic acid, 13-hydroxy-12-oxo-9(Z)-octadecenoic acid, 9-oxo-10(E),12(Z)-octadecadienoic acid (9-KODE), 13-oxo-9(Z),11(E)-octadecadienoic acid (13-KODE) and 12-oxo-10,15(Z)-phytodienoic acid (12-OPDA). This is Chloroplast envelope quinone oxidoreductase homolog from Arabidopsis thaliana (Mouse-ear cress).